We begin with the raw amino-acid sequence, 195 residues long: Sec-independent protein translocase protein TatB (195 aa).

A helical membrane pass occupies residues methionine 1–glycine 21. The segment at aspartate 166–serine 195 is disordered. Residues proline 183–serine 195 show a composition bias toward polar residues.

Belongs to the TatB family. In terms of assembly, the Tat system comprises two distinct complexes: a TatABC complex, containing multiple copies of TatA, TatB and TatC subunits, and a separate TatA complex, containing only TatA subunits. Substrates initially bind to the TatABC complex, which probably triggers association of the separate TatA complex to form the active translocon.

It is found in the cell inner membrane. Part of the twin-arginine translocation (Tat) system that transports large folded proteins containing a characteristic twin-arginine motif in their signal peptide across membranes. Together with TatC, TatB is part of a receptor directly interacting with Tat signal peptides. TatB may form an oligomeric binding site that transiently accommodates folded Tat precursor proteins before their translocation. The protein is Sec-independent protein translocase protein TatB of Actinobacillus pleuropneumoniae serotype 5b (strain L20).